The primary structure comprises 179 residues: Natural killer cells antigen CD94 (179 aa).

Over M1–R10 the chain is Cytoplasmic. Residues L11–L31 form a helical; Signal-anchor for type II membrane protein membrane-spanning segment. The Extracellular portion of the chain corresponds to K32–I179. 2 disulfides stabilise this stretch: C58-C70 and C61-C72. Residues Y68–K175 enclose the C-type lectin domain. N-linked (GlcNAc...) asparagine glycans are attached at residues N83 and N132. Disulfide bonds link C89-C174 and C152-C166.

As to quaternary structure, can form disulfide-bonded heterodimer with NKG2 family members KLRC1 and KLRC2. KLRD1-KLRC1 heterodimer interacts with peptide-bound MHC-E-B2M heterotrimeric complex. KLRD1 plays a prominent role in directly interacting with MHC-E. KLRD1-KLRC1 interacts with much higher affinity with peptide-bound MHC-E-B2M than KLRD1-KLRC2. Interacts with the adapter protein TYROBP/DAP12; this interaction is required for cell surface expression and cell activation. Natural killer cells.

It localises to the cell membrane. Functionally, immune receptor involved in self-nonself discrimination. In complex with KLRC1 or KLRC2 on cytotoxic and regulatory lymphocyte subsets, recognizes non-classical major histocompatibility (MHC) class Ib molecule MHC-E loaded with self-peptides derived from the signal sequence of classical MHC class Ia and non-classical MHC class Ib molecules. Enables cytotoxic cells to monitor the expression of MHC class I molecules in healthy cells and to tolerate self. Primarily functions as a ligand binding subunit as it lacks the capacity to signal. KLRD1-KLRC1 acts as an immune inhibitory receptor. Key inhibitory receptor on natural killer (NK) cells that regulates their activation and effector functions. Dominantly counteracts T cell receptor signaling on a subset of memory/effector CD8-positive T cells as part of an antigen-driven response to avoid autoimmunity. On intraepithelial CD8-positive gamma-delta regulatory T cells triggers TGFB1 secretion, which in turn limits the cytotoxic programming of intraepithelial CD8-positive alpha-beta T cells, distinguishing harmless from pathogenic antigens. In MHC-E-rich tumor microenvironment, acts as an immune inhibitory checkpoint and may contribute to progressive loss of effector functions of NK cells and tumor-specific T cells, a state known as cell exhaustion. Upon MHC-E-peptide binding, transmits intracellular signals through KLRC1 immunoreceptor tyrosine-based inhibition motifs (ITIMs) by recruiting INPP5D/SHIP-1 and INPPL1/SHIP-2 tyrosine phosphatases to ITIMs, and ultimately opposing signals transmitted by activating receptors through dephosphorylation of proximal signaling molecules. In terms of biological role, KLRD1-KLRC2 acts as an immune activating receptor. On cytotoxic lymphocyte subsets recognizes MHC-E loaded with signal sequence-derived peptides from non-classical MHC class Ib MHC-G molecules, likely playing a role in the generation and effector functions of adaptive NK cells and in maternal-fetal tolerance during pregnancy. Regulates the effector functions of terminally differentiated cytotoxic lymphocyte subsets, and in particular may play a role in adaptive NK cell response to viral infection. Upon MHC-E-peptide binding, transmits intracellular signals via the adapter protein TYROBP/DAP12, triggering the phosphorylation of proximal signaling molecules and cell activation. This chain is Natural killer cells antigen CD94 (KLRD1), found in Macaca mulatta (Rhesus macaque).